The primary structure comprises 104 residues: MERVAKLSTEKAVVIFTASNCPMCHTVVSLFSDLGVGAAVHELDRDPLHGRDMERDLARRLGRSPPVPAVFIAGKLVGSTDRVMSLHLAGKLVPMLKAAGAIWL.

Residues 1–103 (MERVAKLSTE…PMLKAAGAIW (103 aa)) form the Glutaredoxin domain. An intrachain disulfide couples Cys21 to Cys24.

It belongs to the glutaredoxin family. CC-type subfamily.

It is found in the cytoplasm. Functionally, has a glutathione-disulfide oxidoreductase activity in the presence of NADPH and glutathione reductase. Reduces low molecular weight disulfides and proteins. The polypeptide is Glutaredoxin-C15 (GRXC15) (Oryza sativa subsp. japonica (Rice)).